A 290-amino-acid polypeptide reads, in one-letter code: Non-homologous end joining protein Ku (290 aa).

Positions 11-183 (TFGLISMPVR…EAPKITSEVK (173 aa)) constitute a Ku domain. The tract at residues 253–290 (MKDQKKGSRLAEVDKESTVQMTPKKPAVKERRGRKRVA) is disordered. Positions 254–269 (KDQKKGSRLAEVDKES) are enriched in basic and acidic residues.

The protein belongs to the prokaryotic Ku family. In terms of assembly, homodimer. Interacts with LigD.

With LigD forms a non-homologous end joining (NHEJ) DNA repair enzyme, which repairs dsDNA breaks with reduced fidelity. Binds linear dsDNA with 5'- and 3'- overhangs but not closed circular dsDNA nor ssDNA. Recruits and stimulates the ligase activity of LigD. In Koribacter versatilis (strain Ellin345), this protein is Non-homologous end joining protein Ku.